Here is a 62-residue protein sequence, read N- to C-terminus: UPF0434 protein R03186 (62 aa).

It belongs to the UPF0434 family.

The sequence is that of UPF0434 protein R03186 from Rhizobium meliloti (strain 1021) (Ensifer meliloti).